A 293-amino-acid polypeptide reads, in one-letter code: MRGSIMILLDEDTRCLVQGITGKQGSFHTRQMLEYGTRIVAGVTPGKGGQEFLGVDVYNSVEEVTEEMDVNASIIFVPAPFAKDAAFESIKHLDLVVIITEHIPVHDSMQIMEYASRMGKTVIGPNTPGIITPGIGKLGIMPTHIFTEGTIGIVSRSGTLTYEFAAQLTEAGFGQSTCVGIGGDPVTGLGFVDVLERFEDDPGTDAVVLIGEIGGDAEERAASYIEQMSKPVFAFISGATAPPGKRMGHAGAIIEGGTGTASSKREALEAAGAVVVDRPSAIVDEIRAQLGVR.

Residues 21-24, Lys-47, and 99-101 contribute to the CoA site; these read TGKQ and ITE. Residue Tyr-162 coordinates substrate. His-249 serves as the catalytic Tele-phosphohistidine intermediate.

It belongs to the succinate/malate CoA ligase alpha subunit family. Heterotetramer of two alpha and two beta subunits.

It catalyses the reaction succinate + ATP + CoA = succinyl-CoA + ADP + phosphate. The catalysed reaction is GTP + succinate + CoA = succinyl-CoA + GDP + phosphate. It functions in the pathway carbohydrate metabolism; tricarboxylic acid cycle; succinate from succinyl-CoA (ligase route): step 1/1. Its function is as follows. Succinyl-CoA synthetase functions in the citric acid cycle (TCA), coupling the hydrolysis of succinyl-CoA to the synthesis of either ATP or GTP and thus represents the only step of substrate-level phosphorylation in the TCA. The alpha subunit of the enzyme binds the substrates coenzyme A and phosphate, while succinate binding and nucleotide specificity is provided by the beta subunit. The chain is Succinate--CoA ligase [ADP-forming] subunit alpha from Methanothermobacter thermautotrophicus (strain ATCC 29096 / DSM 1053 / JCM 10044 / NBRC 100330 / Delta H) (Methanobacterium thermoautotrophicum).